Consider the following 503-residue polypeptide: Aspartyl/glutamyl-tRNA(Asn/Gln) amidotransferase subunit B (503 aa).

The protein belongs to the GatB/GatE family. GatB subfamily. In terms of assembly, heterotrimer of A, B and C subunits.

The enzyme catalyses L-glutamyl-tRNA(Gln) + L-glutamine + ATP + H2O = L-glutaminyl-tRNA(Gln) + L-glutamate + ADP + phosphate + H(+). The catalysed reaction is L-aspartyl-tRNA(Asn) + L-glutamine + ATP + H2O = L-asparaginyl-tRNA(Asn) + L-glutamate + ADP + phosphate + 2 H(+). In terms of biological role, allows the formation of correctly charged Asn-tRNA(Asn) or Gln-tRNA(Gln) through the transamidation of misacylated Asp-tRNA(Asn) or Glu-tRNA(Gln) in organisms which lack either or both of asparaginyl-tRNA or glutaminyl-tRNA synthetases. The reaction takes place in the presence of glutamine and ATP through an activated phospho-Asp-tRNA(Asn) or phospho-Glu-tRNA(Gln). This Cereibacter sphaeroides (strain ATCC 17025 / ATH 2.4.3) (Rhodobacter sphaeroides) protein is Aspartyl/glutamyl-tRNA(Asn/Gln) amidotransferase subunit B.